The chain runs to 416 residues: Gamma-glutamyl phosphate reductase (416 aa).

This sequence belongs to the gamma-glutamyl phosphate reductase family.

Its subcellular location is the cytoplasm. The enzyme catalyses L-glutamate 5-semialdehyde + phosphate + NADP(+) = L-glutamyl 5-phosphate + NADPH + H(+). Its pathway is amino-acid biosynthesis; L-proline biosynthesis; L-glutamate 5-semialdehyde from L-glutamate: step 2/2. Its function is as follows. Catalyzes the NADPH-dependent reduction of L-glutamate 5-phosphate into L-glutamate 5-semialdehyde and phosphate. The product spontaneously undergoes cyclization to form 1-pyrroline-5-carboxylate. The polypeptide is Gamma-glutamyl phosphate reductase (Leptospira interrogans serogroup Icterohaemorrhagiae serovar copenhageni (strain Fiocruz L1-130)).